A 372-amino-acid polypeptide reads, in one-letter code: Protein L-Myc-1a (372 aa).

Disordered stretches follow at residues 172–226 (KVAA…ADPF) and 243–306 (NYAA…DDLR). Acidic residues predominate over residues 187 to 197 (SDDDEDDDEID). Residues 269-284 (ESSSAPSSPLSSPATS) are compositionally biased toward low complexity. Positions 289 to 341 (STEQRRNFLERKRRDDLRSRFQALREEIPGLSGSSKTSKVAILTQATDYLLQL) constitute a bHLH domain. Positions 290–306 (TEQRRNFLERKRRDDLR) are enriched in basic and acidic residues. A leucine-zipper region spans residues 341–369 (LHSSQRRQAQEKRKLKAKQQQLLRRISAL).

As to quaternary structure, efficient DNA binding requires dimerization with another bHLH protein. Binds DNA as a heterodimer with max. As to expression, uterus.

The protein localises to the nucleus. The polypeptide is Protein L-Myc-1a (Danio rerio (Zebrafish)).